Reading from the N-terminus, the 499-residue chain is Ubiquitin carboxyl-terminal hydrolase 16 (499 aa).

The 445-residue stretch at 53–497 (VGLINRGNDC…YAYMLYYERV (445 aa)) folds into the USP domain. Residue Cys-62 is the Nucleophile of the active site. Catalysis depends on His-407, which acts as the Proton acceptor.

The protein belongs to the peptidase C19 family.

The catalysed reaction is Thiol-dependent hydrolysis of ester, thioester, amide, peptide and isopeptide bonds formed by the C-terminal Gly of ubiquitin (a 76-residue protein attached to proteins as an intracellular targeting signal).. This is Ubiquitin carboxyl-terminal hydrolase 16 (UBP16) from Saccharomyces cerevisiae (strain ATCC 204508 / S288c) (Baker's yeast).